The following is a 56-amino-acid chain: Large ribosomal subunit protein bL33 (56 aa).

The protein belongs to the bacterial ribosomal protein bL33 family.

In Acidovorax sp. (strain JS42), this protein is Large ribosomal subunit protein bL33.